We begin with the raw amino-acid sequence, 930 residues long: Semaphorin-6C (930 aa).

An N-terminal signal peptide occupies residues 1–24 (MPRAPHFMPLLLLLLLLSLPHTQA). Over 25-604 (AFPQDPLPLL…ASASRSVPIP (580 aa)) the chain is Extracellular. The 487-residue stretch at 30-516 (PLPLLISDLQ…FSGCIVYLPL (487 aa)) folds into the Sema domain. Residue asparagine 70 is glycosylated (N-linked (GlcNAc...) asparagine). Cystine bridges form between cysteine 111/cysteine 121, cysteine 139/cysteine 148, cysteine 262/cysteine 373, and cysteine 287/cysteine 332. Residue asparagine 286 is glycosylated (N-linked (GlcNAc...) asparagine). Asparagine 437 carries an N-linked (GlcNAc...) asparagine glycan. Intrachain disulfides connect cysteine 479/cysteine 510, cysteine 519/cysteine 537, cysteine 525/cysteine 570, and cysteine 529/cysteine 545. The disordered stretch occupies residues 554-593 (TDVDQAGNQESMEHGDCQDGATGSQSGPGDSAYGVRRDLP). The chain crosses the membrane as a helical span at residues 605–625 (LLLASVAAAFALGASVSGLLV). Topologically, residues 626-930 (SCACRRAHRR…AVPNGGRFNF (305 aa)) are cytoplasmic. 4 disordered regions span residues 654 to 674 (LARL…GDAV), 716 to 761 (GDPW…PGQA), 775 to 882 (HGPQ…PGKH), and 908 to 930 (SLKP…RFNF). The span at 829 to 844 (ASAPARPALSAPAPRL) shows a compositional bias: low complexity.

Belongs to the semaphorin family. In terms of tissue distribution, in adult tissues, expressed only in skeletal muscle.

The protein localises to the cell membrane. Functionally, shows growth cone collapsing activity on dorsal root ganglion (DRG) neurons in vitro. May be a stop signal for the DRG neurons in their target areas, and possibly also for other neurons. May also be involved in the maintenance and remodeling of neuronal connections. This Homo sapiens (Human) protein is Semaphorin-6C (SEMA6C).